The sequence spans 1188 residues: NF-X1-type zinc finger protein NFXL1 (1188 aa).

Residues 1-15 are compositionally biased toward basic and acidic residues; that stretch reads MSFQVRRDRSDDRSH. Disordered stretches follow at residues 1–52 and 65–195; these read MSFQ…ETLD and QHNA…VAKE. 2 stretches are compositionally biased toward polar residues: residues 19–34 and 168–186; these read HQQT…SSVV and ASGT…TRPV. The RING-type; degenerate zinc-finger motif lies at 223–279; sequence CMICYDKVGRSANIWSCSSCYSIFHINCIKRWARAPTSVDLLAEKNQGDNWRCPGCQ. NF-X1-type zinc fingers lie at residues 335 to 353, 390 to 409, 454 to 473, 513 to 532, 572 to 607, 611 to 630, 668 to 686, 721 to 751, and 760 to 781; these read CPHV…PCKA, CGRH…PCQV, CGNH…DCDL, CRLH…PCLV, CGRH…PCQK, CGQH…PCLE, CGHS…PCST, CGMH…TCRQ, and CRHT…RCEF. In terms of domain architecture, R3H spans 894 to 963; it reads PKWVLAVEER…KRFTVVHVTA (70 aa). Residues 1100–1188 are disordered; the sequence is SDDSWGAEDS…VVDDWEKVCE (89 aa). 2 stretches are compositionally biased toward polar residues: residues 1126–1138 and 1159–1169; these read AKSN…SVNR and EESSSSKTTGK.

It belongs to the NFX1 family. Expressed in seedlings, roots, stems, leaves, buds, flowers and siliques.

It is found in the nucleus. Its pathway is protein modification; protein ubiquitination. Its function is as follows. Mediates E2-dependent ubiquitination. Confers resistance to osmotic stress such as high salinity. Promotes H(2)O(2) production. Negative regulator of some defense-related genes via an salicylic acid (SA)-dependent signaling pathway. Confers susceptibility to the compatible phytopathogen Pseudomonas syringae pv. tomato strain DC3000 (Pst DC3000). Mediates resistance to type A trichothecenes (phytotoxins produced by phytopathogenic fungi). This Arabidopsis thaliana (Mouse-ear cress) protein is NF-X1-type zinc finger protein NFXL1 (NFXL1).